The chain runs to 517 residues: Tyrosine 3-monooxygenase (517 aa).

Phosphoserine; by PKA is present on S33. H345, H350, and E390 together coordinate Fe cation.

This sequence belongs to the biopterin-dependent aromatic amino acid hydroxylase family. It depends on Fe(2+) as a cofactor.

It localises to the cytoplasm. The protein localises to the perinuclear region. Its subcellular location is the cell projection. The protein resides in the axon. The enzyme catalyses (6R)-L-erythro-5,6,7,8-tetrahydrobiopterin + L-tyrosine + O2 = (4aS,6R)-4a-hydroxy-L-erythro-5,6,7,8-tetrahydrobiopterin + L-dopa. Its pathway is catecholamine biosynthesis; dopamine biosynthesis; dopamine from L-tyrosine: step 1/2. With respect to regulation, phosphorylation leads to an increase in the catalytic activity. Involved in the synthesis of catecholamines, such as dopamine. Has a role in serotonin signaling. Required for normal explorative and foraging behavior. This chain is Tyrosine 3-monooxygenase (cat-2), found in Caenorhabditis briggsae.